The primary structure comprises 675 residues: Sodium/myo-inositol cotransporter 2 (675 aa).

Topologically, residues 1 to 27 (MESGTSSPQPPQLDPLDAFPQKGLEPG) are extracellular. A helical transmembrane segment spans residues 28–48 (DIAVLVLYFLFVLAVGLWSTV). The Cytoplasmic segment spans residues 49-65 (KTKRDTVKGYFLAGGDM). The helical transmembrane segment at 66-88 (VWWPVGASLFASNVGSGHFIGLA) threads the bilayer. At 89-102 (GSGAATGISVSAYE) the chain is on the extracellular side. The helical transmembrane segment at 103 to 123 (LNGLFSVLMLAWIFLPIYIAG) threads the bilayer. The Cytoplasmic portion of the chain corresponds to 124 to 135 (QVTTMPEYLRKR). A helical membrane pass occupies residues 136–156 (FGGIRIPIILAVLYLFIYIFT). Residues 157-180 (KISVDMYAGAIFIQQSLHLDLYLA) lie on the Extracellular side of the membrane. The helical transmembrane segment at 181 to 201 (IVGLLAITAVYTVAGGLAAVI) threads the bilayer. Over 202–208 (YTDALQT) the chain is Cytoplasmic. A helical transmembrane segment spans residues 209–229 (LIMLIGALTLMGYSFAAVGGM). At 230–272 (EGLKEKYFLALASNRSENSSCGLPREDAFHIFRDPLTSDLPWP) the chain is on the extracellular side. Residues 273-293 (GVLFGMSIPSLWYWCTDQVIV) traverse the membrane as a helical segment. At 294–308 (QRTLAAKNLSHAKGG) the chain is on the cytoplasmic side. A helical transmembrane segment spans residues 309-329 (ALMAAYLKVLPLFIMVFPGMV). Topologically, residues 330 to 375 (SRILFPDQVACADPEICQKICSNPSGCSDIAYPKLVLELLPTGLRG) are extracellular. The chain crosses the membrane as a helical span at residues 376 to 396 (LMMAVMVAALMSSLTSIFNSA). At 397–418 (STIFTMDLWNHLRPRASEKELM) the chain is on the cytoplasmic side. The helical transmembrane segment at 419–439 (IVGRVFVLLLVLVSILWIPVV) threads the bilayer. Residues 440–446 (QASQGGQ) are Extracellular-facing. Residues 447–467 (LFIYIQSISSYLQPPVAVVFI) form a helical membrane-spanning segment. Topologically, residues 468-479 (MGCFWKRTNEKG) are cytoplasmic. A helical membrane pass occupies residues 480-500 (AFWGLISGLLLGLVRLVLDFI). Over 501 to 521 (YVQPRCDQPDERPVLVKSIHY) the chain is Extracellular. A helical membrane pass occupies residues 522 to 542 (LYFSMILSTVTLITVSTVSWF). Topologically, residues 543–654 (TEPPSKEMVS…SLEENPLVKT (112 aa)) are cytoplasmic. A helical membrane pass occupies residues 655 to 675 (LLDVNLIFCVSCAIFIWGYFA).

It belongs to the sodium:solute symporter (SSF) (TC 2.A.21) family. As to expression, highest expression in heart, skeletal muscle, kidney, liver and placenta. Weaker expression in brain, colon, spleen, lung and peripheral blood leukocytes.

The protein localises to the membrane. It localises to the apical cell membrane. It carries out the reaction myo-inositol(out) + 2 Na(+)(out) = myo-inositol(in) + 2 Na(+)(in). The catalysed reaction is 1D-chiro-inositol(out) + 2 Na(+)(out) = 1D-chiro-inositol(in) + 2 Na(+)(in). It catalyses the reaction D-glucose(out) + 2 Na(+)(out) = D-glucose(in) + 2 Na(+)(in). The enzyme catalyses D-xylose(out) + 2 Na(+)(out) = D-xylose(in) + 2 Na(+)(in). Its activity is regulated as follows. MI transport activity inhibited by D-chiro-inositol (DCI), phlorizin (Pz) and sodium (Na(+)). Insulin increases D-chiro-inositol uptake. In terms of biological role, involved in the sodium-dependent cotransport of myo-inositol (MI) with a Na(+):MI stoichiometry of 2:1. Exclusively responsible for apical MI transport and absorption in intestine. Can also transport D-chiro-inositol (DCI) but not L-fucose. Exhibits stereospecific cotransport of both D-glucose and D-xylose. May induce apoptosis through the TNF-alpha, PDCD1 pathway. May play a role in the regulation of MI concentration in serum, involving reabsorption in at least the proximal tubule of the kidney. This Homo sapiens (Human) protein is Sodium/myo-inositol cotransporter 2.